The primary structure comprises 569 residues: 5'-AMP-activated protein kinase subunit gamma-2 (569 aa).

The tract at residues 1 to 222 (MGSAVMDTKK…TRPPLASPTH (222 aa)) is disordered. Ser-65, Ser-71, Ser-73, Ser-90, Ser-138, Ser-143, Ser-161, and Ser-162 each carry phosphoserine. Residues 156–167 (TSGLSSSPSTPT) are compositionally biased toward low complexity. The residue at position 165 (Thr-165) is a Phosphothreonine. A compositionally biased stretch (basic and acidic residues) spans 179–189 (SYKHEPERLEN). Residues 192–212 (YASSSPPDTGQRFCPSSFQSP) show a composition bias toward polar residues. Ser-196 carries the post-translational modification Phosphoserine. 3 consecutive CBS domains span residues 275-335 (PTSS…KSPM), 357-415 (TFKP…MSDM), and 430-492 (IGTY…NLDI). ADP is bound by residues Arg-302, 317–322 (MLTITD), Val-362, 383–384 (HR), and Lys-402. AMP contacts are provided by residues Arg-302, 317–322 (MLTITD), Val-362, His-383, 383–384 (HR), Lys-402, Thr-432, Ala-437, 458–459 (SA), 474–477 (SKFD), Arg-501, His-530, 530–531 (HR), and 546–549 (SLSD). ATP-binding positions include Arg-302, 317-322 (MLTITD), Val-362, 383-384 (HR), Arg-384, and Lys-402. The short motif at 370 to 391 (LFDAVYSLIKNKIHRLPVIDPI) is the AMPK pseudosubstrate element. ADP is bound by residues 474–477 (SKFD), Arg-501, and 530–531 (HR). Residues 474-477 (SKFD), Arg-501, and 530-531 (HR) contribute to the ATP site. One can recognise a CBS 4 domain in the interval 504–562 (YFEGVVKCNKLEILETIVDRIVRAEVHRLVVVNEADSIVGIISLSDILQALILTPAGAK).

Belongs to the 5'-AMP-activated protein kinase gamma subunit family. As to quaternary structure, AMPK is a heterotrimer of an alpha catalytic subunit (PRKAA1 or PRKAA2), a beta (PRKAB1 or PRKAB2) and a gamma non-catalytic subunits (PRKAG1, PRKAG2 or PRKAG3). Interacts with FNIP1 and FNIP2. Phosphorylated by ULK1; leading to negatively regulate AMPK activity and suggesting the existence of a regulatory feedback loop between ULK1 and AMPK. Post-translationally, glycosylated; O-GlcNAcylated by OGT, promoting the AMP-activated protein kinase (AMPK) activity. Isoform B is ubiquitously expressed except in liver and thymus. The highest level is detected in heart with abundant expression in placenta and testis.

AMP/ATP-binding subunit of AMP-activated protein kinase (AMPK), an energy sensor protein kinase that plays a key role in regulating cellular energy metabolism. In response to reduction of intracellular ATP levels, AMPK activates energy-producing pathways and inhibits energy-consuming processes: inhibits protein, carbohydrate and lipid biosynthesis, as well as cell growth and proliferation. AMPK acts via direct phosphorylation of metabolic enzymes, and by longer-term effects via phosphorylation of transcription regulators. Also acts as a regulator of cellular polarity by remodeling the actin cytoskeleton; probably by indirectly activating myosin. Gamma non-catalytic subunit mediates binding to AMP, ADP and ATP, leading to activate or inhibit AMPK: AMP-binding results in allosteric activation of alpha catalytic subunit (PRKAA1 or PRKAA2) both by inducing phosphorylation and preventing dephosphorylation of catalytic subunits. ADP also stimulates phosphorylation, without stimulating already phosphorylated catalytic subunit. ATP promotes dephosphorylation of catalytic subunit, rendering the AMPK enzyme inactive. The chain is 5'-AMP-activated protein kinase subunit gamma-2 (PRKAG2) from Homo sapiens (Human).